We begin with the raw amino-acid sequence, 128 residues long: Small ribosomal subunit protein uS9 (128 aa).

Residues 105-128 (DPRSVERKKPGQPKARRRFQFSKR) are disordered. A compositionally biased stretch (basic residues) spans 114–128 (PGQPKARRRFQFSKR).

It belongs to the universal ribosomal protein uS9 family.

The sequence is that of Small ribosomal subunit protein uS9 from Bacteroides thetaiotaomicron (strain ATCC 29148 / DSM 2079 / JCM 5827 / CCUG 10774 / NCTC 10582 / VPI-5482 / E50).